The chain runs to 167 residues: tRNA-specific adenosine deaminase (167 aa).

Residues 6-117 (FSHEYWMRHA…DAKTGAAGSL (112 aa)) enclose the CMP/dCMP-type deaminase domain. Residue H57 participates in Zn(2+) binding. Residue E59 is the Proton donor of the active site. The Zn(2+) site is built by C87 and C90.

It belongs to the cytidine and deoxycytidylate deaminase family. As to quaternary structure, homodimer. Zn(2+) serves as cofactor.

It carries out the reaction adenosine(34) in tRNA + H2O + H(+) = inosine(34) in tRNA + NH4(+). Catalyzes the deamination of adenosine to inosine at the wobble position 34 of tRNA(Arg2). The protein is tRNA-specific adenosine deaminase of Escherichia coli O157:H7.